Here is a 427-residue protein sequence, read N- to C-terminus: Pseudouridylate synthase 1 homolog (427 aa).

Residues 20 to 83 form a disordered region; sequence GPRPSCSPRM…DEERREKPPK (64 aa). The span at 44 to 79 shows a compositional bias: basic and acidic residues; sequence QDRRSCSGRAGGDRVWEDGEHPAKKLKSGGDEERRE. Aspartate 146 acts as the Nucleophile in catalysis. The disordered stretch occupies residues 407-427; sequence GGTGAKVPSPLEGSEGDGDTD. Serine 415 and serine 420 each carry phosphoserine. Threonine 426 is modified (phosphothreonine).

It belongs to the tRNA pseudouridine synthase TruA family. Monomer. Forms a complex with RARG and the SRA1 RNA in the nucleus. As to expression, widely expressed. High levels of expression found in brain and skeletal muscle.

The protein localises to the mitochondrion. It is found in the nucleus. Its subcellular location is the cytoplasm. It catalyses the reaction a uridine in tRNA = a pseudouridine in tRNA. The catalysed reaction is uridine(38/39/40) in tRNA = pseudouridine(38/39/40) in tRNA. It carries out the reaction a uridine in mRNA = a pseudouridine in mRNA. Its function is as follows. Pseudouridylate synthase that catalyzes pseudouridylation of tRNAs and mRNAs. Acts on positions 27/28 in the anticodon stem and also positions 34 and 36 in the anticodon of an intron containing tRNA. Also catalyzes pseudouridylation of mRNAs: mediates pseudouridylation of mRNAs with the consensus sequence 5'-UGUAG-3'. Acts as a regulator of pre-mRNA splicing by mediating pseudouridylation of pre-mRNAs at locations associated with alternatively spliced regions. Pseudouridylation of pre-mRNAs near splice sites directly regulates mRNA splicing and mRNA 3'-end processing. Involved in regulation of nuclear receptor activity through pseudouridylation of SRA1 mRNA. The chain is Pseudouridylate synthase 1 homolog from Homo sapiens (Human).